A 171-amino-acid chain; its full sequence is Co-chaperone protein HscB homolog (171 aa).

Residues 2-69 (NHFELFDLPV…DSRAAYLLSL (68 aa)) enclose the J domain.

Belongs to the HscB family. Interacts with HscA and stimulates its ATPase activity.

In terms of biological role, co-chaperone involved in the maturation of iron-sulfur cluster-containing proteins. Seems to help targeting proteins to be folded toward HscA. This Acinetobacter baylyi (strain ATCC 33305 / BD413 / ADP1) protein is Co-chaperone protein HscB homolog.